The sequence spans 226 residues: Ras-related protein Rab11A (226 aa).

GTP is bound by residues 24-32, 43-49, 72-76, 130-133, and 160-162; these read GDSAVGKSQ, SLDSKST, DTAGQ, NKCD, and SAL. Positions 46-54 match the Effector region motif; the sequence is SKSTIGVEF. Residues C222 and C223 are each lipidated (S-geranylgeranyl cysteine). Position 223 is a cysteine methyl ester (C223). A propeptide spans 224–226 (removed in mature form); the sequence is QAS.

Belongs to the small GTPase superfamily. Rab family.

It is found in the cell membrane. The protein is Ras-related protein Rab11A (RAB11A) of Lotus japonicus (Lotus corniculatus var. japonicus).